The following is a 165-amino-acid chain: MEKLIEKIIYASRWLMFPVYIGLSFGFILLTLKFFQQIILVIPKILIMSESGLILIVLSLIDIALVGGLLVMVMFSGYENFISKMEINVDKKKLGWMGTMDVNSIKNKVASSIVAISSVHLLRLFMDADKISNDKIMWCVIIHLTFVLSAFGMACIDKMSKKNYS.

The next 3 membrane-spanning stretches (helical) occupy residues 10–32 (YASR…LLTL), 53–75 (LILI…MVMF), and 136–155 (IMWC…GMAC).

Belongs to the UPF0114 family.

It localises to the cell membrane. The polypeptide is UPF0114 protein in repA1-repA2 intergenic region (Buchnera aphidicola subsp. Geoica urticularia).